Consider the following 515-residue polypeptide: Leucine-rich repeat transmembrane neuronal protein 2 (515 aa).

A signal peptide spans Met-1–Ala-33. Topologically, residues Cys-34–Arg-421 are extracellular. An N-linked (GlcNAc...) asparagine glycan is attached at Asn-57. 10 LRR repeats span residues Lys-61–Ser-83, Phe-84–Gly-107, Tyr-109–Gln-131, Leu-132–Gly-155, Leu-156–Asp-179, Arg-181–Gly-203, Ile-205–Arg-227, Ser-229–Thr-251, Trp-252–Thr-275, and Met-276–Ser-299. Asn-126 is a glycosylation site (N-linked (GlcNAc...) asparagine). A glycan (N-linked (GlcNAc...) asparagine) is linked at Asn-243. Residue Asn-362 is glycosylated (N-linked (GlcNAc...) asparagine). Residues Val-422–Ile-442 form a helical membrane-spanning segment. At Ser-443–Val-515 the chain is on the cytoplasmic side. Positions Glu-512–Val-515 match the Involved in DLG4-binding motif.

Belongs to the LRRTM family. Interacts with DLG4. Interacts with neurexin NRXN1; interaction is mediated by heparan sulfate glycan modification on neurexin. Expressed in neuronal tissues. Widely distributed in neuropil regions in discrete puncta throughout the brain (at protein level). Detected in cortex, thalamus, striatum, olfactory bulb, cerebellum and all hippocampal subfields (at protein level). More abundant in deep than in superficial layers of neocortex (at protein level).

It localises to the cell membrane. Its subcellular location is the postsynaptic cell membrane. Its function is as follows. Involved in the development and maintenance of excitatory synapses in the nervous system. Regulates surface expression of AMPA receptors and instructs the development of functional glutamate release sites. Acts as a ligand for the presynaptic receptors NRXN1-A and NRXN1-B. This chain is Leucine-rich repeat transmembrane neuronal protein 2 (Lrrtm2), found in Rattus norvegicus (Rat).